The chain runs to 391 residues: DNA-directed RNA polymerase I subunit RPA43 (391 aa).

Disordered stretches follow at residues 1–27 (MANW…SGGS) and 220–391 (QKQV…KKSK). The segment covering 288–299 (GRHKEKKKKKKR) has biased composition (basic residues). The stretch at 289 to 353 (RHKEKKKKKK…RDKQQDSAEI (65 aa)) forms a coiled coil. Positions 312–323 (MNNNSLQETALD) are enriched in polar residues. The span at 336-345 (KEKKKKKKRD) shows a compositional bias: basic residues.

The protein belongs to the eukaryotic RPA43 RNA polymerase subunit family. As to quaternary structure, component of the RNA polymerase I (Pol I) complex consisting of at least 13 subunits.

The protein localises to the nucleus. The protein resides in the nucleolus. DNA-dependent RNA polymerase catalyzes the transcription of DNA into RNA using the four ribonucleoside triphosphates as substrates. Component of RNA polymerase I which synthesizes ribosomal RNA precursors. May be involved in recruitment of Pol I to rDNA promoters. The protein is DNA-directed RNA polymerase I subunit RPA43 of Danio rerio (Zebrafish).